The sequence spans 298 residues: ADP/ATP translocase 1 (298 aa).

Residues 1-7 (MSDQALS) lie on the Mitochondrial intermembrane side of the membrane. Serine 2 is subject to N-acetylserine. Residues 6–98 (LSFLKDFLAG…FAFKDKYKQI (93 aa)) form a Solcar 1 repeat. Serine 7 is modified (phosphoserine). A helical membrane pass occupies residues 8–37 (FLKDFLAGGVAAAVSKTAVAPIERVKLLLQ). The Mitochondrial matrix portion of the chain corresponds to 38–74 (VQHASKQISAEKQYKGIIDCVVRIPKEQGFLSFWRGN). N6,N6,N6-trimethyllysine is present on lysine 52. Residues 75 to 99 (LANVIRYFPTQALNFAFKDKYKQIF) form a helical membrane-spanning segment. The ADP site is built by arginine 80 and lysine 92. The Mitochondrial intermembrane segment spans residues 100–109 (LGGVDRHKQF). The helical transmembrane segment at 110 to 130 (WRYFAGNLASGGAAGATSLCF) threads the bilayer. 2 Solcar repeats span residues 111 to 201 (RYFA…AKGM) and 212 to 297 (VSWM…IKKY). Over 131–178 (VYPLDFARTRLAADVGKGAAQREFSGLGNCLTKIFKSDGLRGLYQGFN) the chain is Mitochondrial matrix. Position 147 is an N6-succinyllysine (lysine 147). Residue cysteine 160 is modified to S-nitrosocysteine. The helical transmembrane segment at 179 to 199 (VSVQGIIIYRAAYFGVYDTAK) threads the bilayer. The Mitochondrial intermembrane portion of the chain corresponds to 200 to 210 (GMLPDPKNVHI). Residues 211-231 (IVSWMIAQTVTAVAGLVSYPF) traverse the membrane as a helical segment. Residues 232–273 (DTVRRRMMMQSGRKGADIMYTGTVDCWKKIAKDEGAKAFFKG) lie on the Mitochondrial matrix side of the membrane. ADP is bound at residue arginine 235. The tract at residues 235–240 (RRRMMM) is important for transport activity. The Nucleotide carrier signature motif motif lies at 235 to 240 (RRRMMM). Residues lysine 245 and lysine 272 each carry the N6-succinyllysine modification. The chain crosses the membrane as a helical span at residues 274–291 (AWSNVLRGMGGAFVLVLY). The Mitochondrial intermembrane portion of the chain corresponds to 292–298 (DEIKKYV).

Belongs to the mitochondrial carrier (TC 2.A.29) family. In terms of assembly, monomer. Found in a complex with ARL2, ARL2BP and SLC25A4/ANT1. Interacts with ARL2BP. Interacts with TIMM44; leading to inhibit the presequence translocase TIMM23, thereby promoting stabilization of PINK1. Post-translationally, under cell death induction, transglutaminated by TGM2. Transglutamination leads to formation of covalent cross-links between a glutamine and the epsilon-amino group of a lysine residue, forming polymers.

The protein localises to the mitochondrion inner membrane. It is found in the membrane. The enzyme catalyses ADP(in) + ATP(out) = ADP(out) + ATP(in). It carries out the reaction H(+)(in) = H(+)(out). With respect to regulation, the matrix-open state (m-state) is inhibited by the membrane-permeable bongkrekic acid (BKA). The cytoplasmic-open state (c-state) is inhibited by the membrane-impermeable toxic inhibitor carboxyatractyloside (CATR). Proton transporter activity is inhibited by ADP:ATP antiporter activity. Its function is as follows. ADP:ATP antiporter that mediates import of ADP into the mitochondrial matrix for ATP synthesis, and export of ATP out to fuel the cell. Cycles between the cytoplasmic-open state (c-state) and the matrix-open state (m-state): operates by the alternating access mechanism with a single substrate-binding site intermittently exposed to either the cytosolic (c-state) or matrix (m-state) side of the inner mitochondrial membrane. In addition to its ADP:ATP antiporter activity, also involved in mitochondrial uncoupling and mitochondrial permeability transition pore (mPTP) activity. Plays a role in mitochondrial uncoupling by acting as a proton transporter: proton transport uncouples the proton flows via the electron transport chain and ATP synthase to reduce the efficiency of ATP production and cause mitochondrial thermogenesis. Proton transporter activity is inhibited by ADP:ATP antiporter activity, suggesting that SLC25A4/ANT1 acts as a master regulator of mitochondrial energy output by maintaining a delicate balance between ATP production (ADP:ATP antiporter activity) and thermogenesis (proton transporter activity). Proton transporter activity requires free fatty acids as cofactor, but does not transport it. Probably mediates mitochondrial uncoupling in tissues that do not express UCP1. Also plays a key role in mPTP opening, a non-specific pore that enables free passage of the mitochondrial membranes to solutes of up to 1.5 kDa, and which contributes to cell death. It is however unclear if SLC25A4/ANT1 constitutes a pore-forming component of mPTP or regulates it. Acts as a regulator of mitophagy independently of ADP:ATP antiporter activity: promotes mitophagy via interaction with TIMM44, leading to inhibit the presequence translocase TIMM23, thereby promoting stabilization of PINK1. The protein is ADP/ATP translocase 1 of Oryctolagus cuniculus (Rabbit).